The sequence spans 443 residues: Ribosomal protein uS12 methylthiotransferase RimO (443 aa).

Residues M1 to A116 enclose the MTTase N-terminal domain. Residues C10, C45, C79, C154, C158, and C161 each coordinate [4Fe-4S] cluster. In terms of domain architecture, Radical SAM core spans S140–E370. The TRAM domain maps to K373–S441.

Belongs to the methylthiotransferase family. RimO subfamily. [4Fe-4S] cluster is required as a cofactor.

It localises to the cytoplasm. The catalysed reaction is L-aspartate(89)-[ribosomal protein uS12]-hydrogen + (sulfur carrier)-SH + AH2 + 2 S-adenosyl-L-methionine = 3-methylsulfanyl-L-aspartate(89)-[ribosomal protein uS12]-hydrogen + (sulfur carrier)-H + 5'-deoxyadenosine + L-methionine + A + S-adenosyl-L-homocysteine + 2 H(+). Functionally, catalyzes the methylthiolation of an aspartic acid residue of ribosomal protein uS12. In Desulfotalea psychrophila (strain LSv54 / DSM 12343), this protein is Ribosomal protein uS12 methylthiotransferase RimO.